The following is a 235-amino-acid chain: Phosphoribosylaminoimidazole-succinocarboxamide synthase (235 aa).

It belongs to the SAICAR synthetase family.

The enzyme catalyses 5-amino-1-(5-phospho-D-ribosyl)imidazole-4-carboxylate + L-aspartate + ATP = (2S)-2-[5-amino-1-(5-phospho-beta-D-ribosyl)imidazole-4-carboxamido]succinate + ADP + phosphate + 2 H(+). The protein operates within purine metabolism; IMP biosynthesis via de novo pathway; 5-amino-1-(5-phospho-D-ribosyl)imidazole-4-carboxamide from 5-amino-1-(5-phospho-D-ribosyl)imidazole-4-carboxylate: step 1/2. In Streptococcus thermophilus (strain ATCC BAA-491 / LMD-9), this protein is Phosphoribosylaminoimidazole-succinocarboxamide synthase.